Consider the following 556-residue polypeptide: Glutamine--tRNA ligase (556 aa).

The short motif at 39–49 (PEPNGYLHIGH) is the 'HIGH' region element. ATP-binding positions include 40–42 (EPN) and 46–52 (HIGHAKS). L-glutamine is bound by residues Asp72 and Tyr217. ATP is bound by residues Thr236 and 267 to 268 (RL). Residues 274–278 (LTSKR) carry the 'KMSKS' region motif.

Belongs to the class-I aminoacyl-tRNA synthetase family. As to quaternary structure, monomer.

The protein localises to the cytoplasm. It catalyses the reaction tRNA(Gln) + L-glutamine + ATP = L-glutaminyl-tRNA(Gln) + AMP + diphosphate. The polypeptide is Glutamine--tRNA ligase (Haemophilus ducreyi (strain 35000HP / ATCC 700724)).